The primary structure comprises 1230 residues: ATP-dependent helicase/nuclease subunit A (1230 aa).

Residues 9 to 480 (STWTDDQWKA…IDLNKNFRSR (472 aa)) form the UvrD-like helicase ATP-binding domain. 30-37 (AAAGSGKT) contacts ATP. Positions 507 to 796 (QAELKLGASY…RLMTIHSSKG (290 aa)) constitute a UvrD-like helicase C-terminal domain.

This sequence belongs to the helicase family. AddA subfamily. In terms of assembly, heterodimer of AddA and AddB/RexB. Requires Mg(2+) as cofactor.

It carries out the reaction Couples ATP hydrolysis with the unwinding of duplex DNA by translocating in the 3'-5' direction.. It catalyses the reaction ATP + H2O = ADP + phosphate + H(+). Its function is as follows. The heterodimer acts as both an ATP-dependent DNA helicase and an ATP-dependent, dual-direction single-stranded exonuclease. Recognizes the chi site generating a DNA molecule suitable for the initiation of homologous recombination. The AddA nuclease domain is required for chi fragment generation; this subunit has the helicase and 3' -&gt; 5' nuclease activities. This chain is ATP-dependent helicase/nuclease subunit A, found in Bacillus licheniformis (strain ATCC 14580 / DSM 13 / JCM 2505 / CCUG 7422 / NBRC 12200 / NCIMB 9375 / NCTC 10341 / NRRL NRS-1264 / Gibson 46).